Consider the following 519-residue polypeptide: Cytosol aminopeptidase (519 aa).

At S42 the chain carries Phosphoserine. Position 45 is an N6-succinyllysine (K45). Residue S54 is modified to Phosphoserine. An N6-succinyllysine mark is found at K61 and K103. 2 positions are modified to phosphoserine: S180 and S194. Residues L202, M203, and T205 each coordinate Zn(2+). Residue K221 is modified to N6-acetyllysine; alternate. Residue K221 is modified to N6-succinyllysine; alternate. S238 is subject to Phosphoserine. K282 and D287 together coordinate Zn(2+). 4 residues coordinate substrate: K282, D287, S292, and K294. D287 is a binding site for Mg(2+). K294 is an active-site residue. R303, D305, D364, and E366 together coordinate Zn(2+). Residues D305 and D364 each coordinate substrate. Mg(2+) is bound by residues D364 and E366. R368 is an active-site residue. K455 bears the N6-acetyllysine; alternate mark. K455 is modified (N6-succinyllysine; alternate). N6-succinyllysine is present on K476. An N6-acetyllysine; alternate modification is found at K489. N6-succinyllysine; alternate is present on K489.

This sequence belongs to the peptidase M17 family. Homohexamer. Requires Zn(2+) as cofactor. Mn(2+) serves as cofactor.

The protein resides in the cytoplasm. The catalysed reaction is Release of an N-terminal amino acid, Xaa-|-Yaa-, in which Xaa is preferably Leu, but may be other amino acids including Pro although not Arg or Lys, and Yaa may be Pro. Amino acid amides and methyl esters are also readily hydrolyzed, but rates on arylamides are exceedingly low.. The enzyme catalyses an S-substituted L-cysteinylglycine + H2O = an S-substituted L-cysteine + glycine. It carries out the reaction L-cysteinylglycine + H2O = L-cysteine + glycine. It catalyses the reaction S-benzyl-L-cysteinylglycine + H2O = S-benzyl-L-cysteine + glycine. The catalysed reaction is Release of N-terminal proline from a peptide.. Its function is as follows. Cytosolic metallopeptidase that catalyzes the removal of unsubstituted N-terminal hydrophobic amino acids from various peptides. The presence of Zn(2+) ions is essential for the peptidase activity, and the association with other cofactors can modulate the substrate spectificity of the enzyme. For instance, in the presence of Mn(2+), it displays a specific Cys-Gly hydrolyzing activity of Cys-Gly-S-conjugates. Involved in the metabolism of glutathione and in the degradation of glutathione S-conjugates, which may play a role in the control of the cell redox status. This chain is Cytosol aminopeptidase, found in Homo sapiens (Human).